Here is a 640-residue protein sequence, read N- to C-terminus: Uromodulin (640 aa).

An N-terminal signal peptide occupies residues 1–24 (MGQPSLTWMLMVVVASWFITTAAT). The EGF-like 1 domain occupies 28–64 (EARWCSECHSNATCTEDEAVTTCTCQEGFTGDGLTCV). 21 disulfide bridges follow: Cys32–Cys41, Cys35–Cys50, Cys52–Cys63, Cys69–Cys83, Cys77–Cys92, Cys94–Cys106, Cys112–Cys126, Cys120–Cys135, Cys137–Cys148, Cys150–Cys161, Cys155–Cys170, Cys174–Cys267, Cys195–Cys282, Cys217–Cys255, Cys223–Cys287, Cys248–Cys256, Cys297–Cys306, Cys300–Cys315, Cys317–Cys347, Cys335–Cys425, and Cys366–Cys389. Asn38 is a glycosylation site (N-linked (GlcNAc...) asparagine). Positions 65–107 (DLDECAIPGAHNCSANSSCVNTPGSFSCVCPEGFRLSPGLGCT) constitute an EGF-like 2; calcium-binding domain. 2 N-linked (GlcNAc...) asparagine glycosylation sites follow: Asn76 and Asn80. The region spanning 108 to 149 (DVDECAEPGLSHCHALATCVNVVGSYLCVCPAGYRGDGWHCE) is the EGF-like 3; calcium-binding domain. Positions 150-171 (CSPGSCGPGLDCVPEGDALVCA) are beta hairpin. A D10C region spans residues 172-291 (DPCQAHRTLD…CHLAYCTDPS (120 aa)). The N-linked (GlcNAc...) (complex) asparagine glycan is linked to Asn232. A glycan (N-linked (GlcNAc...) (high mannose) asparagine) is linked at Asn275. The region spanning 292–323 (SVEGTCEECSIDEDCKSNNGRWHCQCKQDFNI) is the EGF-like 4 domain. N-linked (GlcNAc...) (complex) asparagine glycosylation occurs at Asn322. Residues 334-429 (ECGANDMKVS…KINFACSYPL (96 aa)) form a ZP-N region. Residues 334–589 (ECGANDMKVS…PTCSGTRFRS (256 aa)) enclose the ZP domain. The N-linked (GlcNAc...) (complex) asparagine glycan is linked to Asn396. Residues 430–453 (DMKVSLKTALQPMVSALNIRVGGT) form a flexible ZP-N/ZP-C linker; important for secretion and polymerization into filaments region. Residues 454 to 465 (GMFTVRMALFQT) form an internal hydrophobic patch (IHP) region. Residues 454-589 (GMFTVRMALF…PTCSGTRFRS (136 aa)) form a ZP-C region. Cystine bridges form between Cys506–Cys566, Cys527–Cys582, and Cys571–Cys578. N-linked (GlcNAc...) (complex) asparagine; alternate glycosylation occurs at Asn513. Asn513 carries an N-linked (GlcNAc...) (high mannose) asparagine; alternate glycan. The interval 586-589 (RFRS) is essential for cleavage by HPN. Positions 598 to 606 (VLNLGPITR) are external hydrophobic patch (EHP); regulates polymerization into filaments. Ser614 is lipidated: GPI-anchor amidated serine. Positions 615-640 (RAFSSLGLLKVWLPLLLSATLTLTFQ) are cleaved as a propeptide — removed in mature form.

Homodimer that then polymerizes into long filaments. The filaments can additionally assemble laterally to form a sheet. The filaments consist of a zigzag-shaped backbone with laterally protruding arms which interact with bacterial adhesin fimH. Two fimH molecules can bind to a single UMOD monomer. Post-translationally, N-glycosylated. N-glycan heterogeneity at Asn-232: Hex7HexNAc6 (major) and dHex1Hex7HexNAc6 (minor); at Asn-322: dHex1Hex6HexNAc5 (minor), dHex1Hex7HexNAc6 (major) and dHex1Hex8HexNAc7 (minor); at Asn-396: Hex6HexNAc5 (major), dHex1Hex6HexNAc5 (minor) and Hex7HexNAc6 (minor). Glycosylated Asn-232 interacts with E.coli adhesin fimH. Other complex glycosylation sites may serve as binding sites for proteins from other bacteria inclduding K.pneumoniae, P.aeruginosa and S.mitis. In terms of processing, proteolytically cleaved at a conserved C-terminal proteolytic cleavage site to generate the secreted form found in urine. This cleavage is catalyzed by HPN. Expressed in the tubular cells of the kidney. Most abundant protein in normal urine (at protein level). Synthesized exclusively in the kidney. Expressed exclusively by epithelial cells of the thick ascending limb of Henle's loop (TALH) and of distal convoluted tubule lumen.

Its subcellular location is the apical cell membrane. The protein localises to the basolateral cell membrane. It is found in the cell projection. The protein resides in the cilium membrane. It localises to the secreted. Functions in biogenesis and organization of the apical membrane of epithelial cells of the thick ascending limb of Henle's loop (TALH), where it promotes formation of complex filamentous gel-like structure that may play a role in the water barrier permeability. May serve as a receptor for binding and endocytosis of cytokines (IL-1, IL-2) and TNF. Facilitates neutrophil migration across renal epithelia. Its function is as follows. In the urine, may contribute to colloid osmotic pressure, retards passage of positively charged electrolytes, and inhibits formation of liquid containing supersaturated salts and subsequent formation of salt crystals. Protects against urinary tract infections by binding to type 1 fimbriated E.coli. Binds to bacterial adhesin fimH which mediates the stable formation of bacterial aggregates, prevents the binding of E.coli to uroplakins UPK1A and UPK1B which act as urothelial receptors for type I fimbriae, and allows for pathogen clearance through micturation. Also promotes aggregation of other bacteria including K.pneumoniae, P.aeruginosa and S.mitis and so may also protect against other uropathogens. This is Uromodulin (UMOD) from Homo sapiens (Human).